The sequence spans 560 residues: Glutamate--tRNA ligase (560 aa).

Residues 108–118 (PNPSGPLHLGH) carry the 'HIGH' region motif.

The protein belongs to the class-I aminoacyl-tRNA synthetase family. Glutamate--tRNA ligase type 2 subfamily.

The protein localises to the cytoplasm. It carries out the reaction tRNA(Glu) + L-glutamate + ATP = L-glutamyl-tRNA(Glu) + AMP + diphosphate. In terms of biological role, catalyzes the attachment of glutamate to tRNA(Glu) in a two-step reaction: glutamate is first activated by ATP to form Glu-AMP and then transferred to the acceptor end of tRNA(Glu). This chain is Glutamate--tRNA ligase, found in Methanocorpusculum labreanum (strain ATCC 43576 / DSM 4855 / Z).